The chain runs to 346 residues: Sensor histidine kinase GraS (346 aa).

2 consecutive transmembrane segments (helical) span residues Met15–Asp35 and Leu43–Phe63. The 207-residue stretch at Glu126–Asn332 folds into the Histidine kinase domain.

In terms of assembly, interacts with GraX.

The protein localises to the cell membrane. The enzyme catalyses ATP + protein L-histidine = ADP + protein N-phospho-L-histidine.. In terms of biological role, member of the two-component regulatory system GraR/GraS involved in resistance against cationic antimicrobial peptides (CAMPs). Functions as a sensor protein kinase which phosphorylates GraR through the auxiliary protein GraX. In turn, GraR up-regulates many genes such as adhesins, exoproteins, transporters, toxins, and proteins involved in cell wall synthesis. Down-regulates the expression of many genes involved in RNA and amino acid synthesis or glycolysis. The chain is Sensor histidine kinase GraS (graS) from Staphylococcus aureus (strain Mu50 / ATCC 700699).